Here is a 908-residue protein sequence, read N- to C-terminus: 26S proteasome non-ATPase regulatory subunit 2 (908 aa).

Residue methionine 1 is modified to N-acetylmethionine. Residues 1–51 (MEEGGRDKTPVQSQQPSATAPSGADEKSSGKERRDAGEKDKEQELSEEDKQ) are disordered. Threonine 9 is subject to Phosphothreonine. Polar residues predominate over residues 10 to 20 (PVQSQQPSATA). The span at 24-51 (ADEKSSGKERRDAGEKDKEQELSEEDKQ) shows a compositional bias: basic and acidic residues. Phosphoserine is present on residues serine 29 and serine 147. At tyrosine 194 the chain carries Phosphotyrosine. Serine 361 and serine 363 each carry phosphoserine. PC repeat units follow at residues 409–442 (SAAA…YIKS), 443–479 (GALL…TMRL), 480–514 (GSIF…SMEV), 517–551 (VTAL…TELK), and 560–589 (LGLG…PFRS). Lysine 551 bears the N6-acetyllysine mark. A compositionally biased stretch (basic and acidic residues) spans 623–643 (KEKEEDKDKKEKKDKDKKEAP). The interval 623 to 645 (KEKEEDKDKKEKKDKDKKEAPAD) is disordered. PC repeat units lie at residues 692-723 (LALA…EVSY) and 742-757 (AAML…KDPN). A required for interaction with UBLCP1 region spans residues 708–903 (DTLSKFSHDA…LEGFVILRKN (196 aa)).

The protein belongs to the proteasome subunit S2 family. As to quaternary structure, component of the 19S proteasome regulatory particle complex. The 26S proteasome consists of a 20S core particle (CP) and two 19S regulatory subunits (RP). The regulatory particle is made of a lid composed of 9 subunits, a base containing 6 ATPases and few additional components including PSMD2. Interacts with RPGRIP1L. Interacts with CRY1 in a KDM8-dependent manner. Interacts (via C-terminus) with phosphatase UBLCP1 (via ubiquitin-like domain); the interaction recruits UBLCP1 to the 19S regulatory particle where it dephosphorylates 19S subunit PSMC2/RPT1 which impairs PSMC2 ATPase activity and disrupts 26S proteasome assembly.

Functionally, component of the 26S proteasome, a multiprotein complex involved in the ATP-dependent degradation of ubiquitinated proteins. This complex plays a key role in the maintenance of protein homeostasis by removing misfolded or damaged proteins, which could impair cellular functions, and by removing proteins whose functions are no longer required. Therefore, the proteasome participates in numerous cellular processes, including cell cycle progression, apoptosis, or DNA damage repair. In terms of biological role, binds to the intracellular domain of tumor necrosis factor type 1 receptor. The binding domain of TRAP1 and TRAP2 resides outside the death domain of TNFR1. The protein is 26S proteasome non-ATPase regulatory subunit 2 (Psmd2) of Rattus norvegicus (Rat).